A 241-amino-acid polypeptide reads, in one-letter code: Small ribosomal subunit protein eS4 (241 aa).

An S4 RNA-binding domain is found at 37-100; that stretch reads LPIVVWARDQ…GKHYRILRDK (64 aa).

The protein belongs to the eukaryotic ribosomal protein eS4 family.

The chain is Small ribosomal subunit protein eS4 from Methanospirillum hungatei JF-1 (strain ATCC 27890 / DSM 864 / NBRC 100397 / JF-1).